Consider the following 404-residue polypeptide: Succinyl-diaminopimelate desuccinylase (404 aa).

H80 lines the Zn(2+) pocket. Residue D82 is part of the active site. D113 provides a ligand contact to Zn(2+). The Proton acceptor role is filled by E147. 3 residues coordinate Zn(2+): E148, E176, and H373.

This sequence belongs to the peptidase M20A family. DapE subfamily. In terms of assembly, homodimer. Zn(2+) is required as a cofactor. Requires Co(2+) as cofactor.

The enzyme catalyses N-succinyl-(2S,6S)-2,6-diaminopimelate + H2O = (2S,6S)-2,6-diaminopimelate + succinate. It participates in amino-acid biosynthesis; L-lysine biosynthesis via DAP pathway; LL-2,6-diaminopimelate from (S)-tetrahydrodipicolinate (succinylase route): step 3/3. Functionally, catalyzes the hydrolysis of N-succinyl-L,L-diaminopimelic acid (SDAP), forming succinate and LL-2,6-diaminopimelate (DAP), an intermediate involved in the bacterial biosynthesis of lysine and meso-diaminopimelic acid, an essential component of bacterial cell walls. The chain is Succinyl-diaminopimelate desuccinylase from Allorhizobium ampelinum (strain ATCC BAA-846 / DSM 112012 / S4) (Agrobacterium vitis (strain S4)).